Consider the following 329-residue polypeptide: Mitochondrial glycine transporter (329 aa).

Solcar repeat units lie at residues 19-103, 130-214, and 232-316; these read SKTT…LRQP, LSNW…LKRH, and SSSS…LILR. The next 6 membrane-spanning stretches (helical) occupy residues 25-50, 78-104, 136-161, 189-212, 236-262, and 291-309; these read FAAG…TRVQ, GTLP…RQPL, LGTG…VRYE, GFGA…EQLK, INFI…KTRL, and GLGL…AWTV.

This sequence belongs to the mitochondrial carrier (TC 2.A.29) family. SLC25A38 subfamily.

It localises to the mitochondrion inner membrane. The enzyme catalyses glycine(in) = glycine(out). Functionally, mitochondrial glycine transporter that imports glycine into the mitochondrial matrix. Plays an important role in providing glycine for the first enzymatic step in heme biosynthesis, the condensation of glycine with succinyl-CoA to produce 5-aminolevulinate (ALA) in the mitochondrial matrix. This chain is Mitochondrial glycine transporter, found in Aspergillus terreus (strain NIH 2624 / FGSC A1156).